Consider the following 906-residue polypeptide: Serine-aspartate repeat-containing protein C (906 aa).

Positions 1 to 50 are cleaved as a signal peptide; the sequence is MNNKKTATNRKGMIPNRLNKFSIRKYSVGTASILVGTTLIFGLSGHEAKA. Residues 51 to 127 form a disordered region; sequence AEHTNGELNQ…QPTKKNNDAT (77 aa). Residues 51–486 are ligand binding A region; the sequence is AEHTNGELNQ…GSSTANGDQK (436 aa). Polar residues-rich tracts occupy residues 56-71 and 80-119; these read GELNQSKNEATAPSEN and RQQNNVEQSTTSNQPKVNESDNTSVKETTEEPQNTTSTQP. 2 consecutive CNA-B domains span residues 487 to 597 and 598 to 708; these read KYNL…YKTP and KYSL…EEET. The interval 669 to 881 is disordered; the sequence is KQTGTNTTED…TGSENNGSNN (213 aa). 2 stretches are compositionally biased toward acidic residues: residues 676-686 and 703-845; these read TEDDKDADGGE and YFEE…DSDS. Residues 869–873 carry the LPXTG sorting signal motif; that stretch reads LPETG. Thr-872 is modified (pentaglycyl murein peptidoglycan amidated threonine). The propeptide at 873–906 is removed by sortase; the sequence is GSENNGSNNATLFGGLFAALGSLLLFGRRKKQNK.

This sequence belongs to the serine-aspartate repeat-containing protein (SDr) family. In terms of assembly, homodimerizes; via N2-Domain. Interacts with host NRXN1; this interaction mediates bacterial attachment to host cells.

It is found in the secreted. It localises to the cell wall. Functionally, cell surface-associated calcium-binding protein which plays an important role in adhesion and pathogenesis. Mediates interactions with components of the extracellular matrix such as host NRXN1 to promote bacterial adhesion. The polypeptide is Serine-aspartate repeat-containing protein C (sdrC) (Staphylococcus aureus (strain MRSA252)).